The primary structure comprises 469 residues: MEKPRVRVRGIYATAVAKVLLDEGLELSDLSKKLKERIGHEGSPEPPHVTVKQSDDNPDQLVIIGFPEETDKVIQTLRKSMPYSVHHLARPNLHSAYVVEVDEECRTKLGEEEVRVKAKECYDGKKLIAEVVRSRVFPTDKLVMEEGFRVIGLYAELVIGRGSGVTFSKHITDLETKMLLMNLAAEVVRRGVKVHWRSSAKKAEPQVLLEELEKLYDEATKIMVKARDADHGTEVYPGERLDVVELTLEDKVILDEIRSKVVPTMPYHHSLKSGGDRMAAAVELGDKIAASSEVKAESVIDYIIDLARDMKYLNIIHKKVDGAEYSLGRARVRGNVDNYLVLERRSKDYGKYDGLDVVKEPGDLMITLVSPFSRYLIHAYYDQYGNEKGIYVNVNTGVEVGEGNVRYIDLEVDIIHKDGEWSVIDEDGLDRLPAPLRELAVAEVEKLLSHPDRIKEVVANARELLSAQL.

It belongs to the FAU-1 family.

In terms of biological role, probable RNase involved in rRNA stability through maturation and/or degradation of precursor rRNAs. Binds to RNA in loop regions with AU-rich sequences. This chain is Probable ribonuclease FAU-1, found in Ignicoccus hospitalis (strain KIN4/I / DSM 18386 / JCM 14125).